A 333-amino-acid chain; its full sequence is NAC domain-containing protein 26 (333 aa).

The NAC domain occupies 14–173 (LPPGFRFHPT…DWAVCRIFHK (160 aa)). A DNA-binding region spans residues 114–179 (IGMKKTLVFY…IFHKSSGIKK (66 aa)). Positions 143–162 (ADASPPQPPPPPSSAEPPRQ) are disordered. Positions 147–157 (PPQPPPPPSSA) are enriched in pro residues.

In terms of assembly, forms homodimers. Forms heterodimers with NAC20. Forms heterodimers with NAC23. Expressed in developing seeds.

It localises to the nucleus. Its function is as follows. Transcription factor that acts redundantly with NAC20 to regulate the expression of genes involved in the biosynthesis of starch and storage proteins in grain. Directly binds to the promoters of starch synthase 1 (SS1), pullulanase (PUL), glutelin A1 (GLUA1), glutelins B4 and B5 (GLUB4 and GLUB5), alpha-globulin and 16 kDa prolamin, and activates their expression. Possesses transactivation activity in yeast. The protein is NAC domain-containing protein 26 of Oryza sativa subsp. indica (Rice).